The chain runs to 119 residues: Large ribosomal subunit protein bL20 (119 aa).

This sequence belongs to the bacterial ribosomal protein bL20 family.

In terms of biological role, binds directly to 23S ribosomal RNA and is necessary for the in vitro assembly process of the 50S ribosomal subunit. It is not involved in the protein synthesizing functions of that subunit. This is Large ribosomal subunit protein bL20 from Neisseria gonorrhoeae (strain ATCC 700825 / FA 1090).